The chain runs to 402 residues: Putative cytochrome P450 123 (402 aa).

Cys350 provides a ligand contact to heme.

This sequence belongs to the cytochrome P450 family. It depends on heme as a cofactor.

In Mycobacterium bovis (strain ATCC BAA-935 / AF2122/97), this protein is Putative cytochrome P450 123 (cyp123).